The following is a 966-amino-acid chain: Leucine--tRNA ligase (966 aa).

Positions 41–51 (PYLNGNLHAGH) match the 'HIGH' region motif. The short motif at 632 to 636 (KMSKS) is the 'KMSKS' region element. Position 635 (Lys-635) interacts with ATP.

This sequence belongs to the class-I aminoacyl-tRNA synthetase family.

It localises to the cytoplasm. The catalysed reaction is tRNA(Leu) + L-leucine + ATP = L-leucyl-tRNA(Leu) + AMP + diphosphate. The sequence is that of Leucine--tRNA ligase from Methanosarcina barkeri (strain Fusaro / DSM 804).